The following is a 484-amino-acid chain: NADH-quinone oxidoreductase subunit N (484 aa).

The next 13 membrane-spanning stretches (helical) occupy residues 10-30 (LALP…VDLF), 40-60 (FYLT…TQWG), 74-94 (SLGA…LAYT), 108-128 (FYLL…GGSL), 129-149 (LSLY…VAYH), 163-183 (FVLG…VYGA), 203-223 (LMLL…LGAA), 237-257 (PTPV…ALFM), 272-292 (EPML…IAIV), 299-319 (MLAY…TAGT), 327-347 (LFYT…ITVL), 370-390 (YAGV…TVGF), and 404-424 (GHIP…FYYL).

The protein belongs to the complex I subunit 2 family. NDH-1 is composed of 14 different subunits. Subunits NuoA, H, J, K, L, M, N constitute the membrane sector of the complex.

The protein localises to the cell inner membrane. It carries out the reaction a quinone + NADH + 5 H(+)(in) = a quinol + NAD(+) + 4 H(+)(out). NDH-1 shuttles electrons from NADH, via FMN and iron-sulfur (Fe-S) centers, to quinones in the respiratory chain. The immediate electron acceptor for the enzyme in this species is believed to be ubiquinone. Couples the redox reaction to proton translocation (for every two electrons transferred, four hydrogen ions are translocated across the cytoplasmic membrane), and thus conserves the redox energy in a proton gradient. The sequence is that of NADH-quinone oxidoreductase subunit N from Halorhodospira halophila (strain DSM 244 / SL1) (Ectothiorhodospira halophila (strain DSM 244 / SL1)).